Consider the following 85-residue polypeptide: Putative membrane protein insertion efficiency factor (85 aa).

It belongs to the UPF0161 family.

The protein localises to the cell inner membrane. Its function is as follows. Could be involved in insertion of integral membrane proteins into the membrane. The protein is Putative membrane protein insertion efficiency factor of Sodalis glossinidius (strain morsitans).